Reading from the N-terminus, the 772-residue chain is Uracil catabolism protein 2 (772 aa).

The segment at 1-70 is disordered; sequence MDINSNASVS…KKPRKKRKTF (70 aa). Basic and acidic residues predominate over residues 39-51; that stretch reads HPEDSARAKERSE. Over residues 59–69 the composition is skewed to basic residues; it reads GNKKPRKKRKT. The segment at residues 72–101 is a DNA-binding region (zn(2)-C6 fungal-type); sequence CDTCRRVKTRCDFEPFIGKCYRCNVLQLDC.

This sequence belongs to the URC2 family.

Its subcellular location is the cytoplasm. It localises to the nucleus. Probable transcriptional activator involved in uracil catabolism. This Saccharomyces cerevisiae (strain ATCC 204508 / S288c) (Baker's yeast) protein is Uracil catabolism protein 2 (URC2).